The primary structure comprises 282 residues: Putative hydrolase Bcenmc03_4750 (282 aa).

The Mg(2+) site is built by glutamate 124, glutamate 126, and aspartate 155.

It belongs to the FAH family. It depends on Mg(2+) as a cofactor.

The polypeptide is Putative hydrolase Bcenmc03_4750 (Burkholderia orbicola (strain MC0-3)).